The chain runs to 331 residues: Major outer membrane protein P.IB (331 aa).

The first 19 residues, 1-19 (MKKSLIALTLAALPVAAMA), serve as a signal peptide directing secretion.

Belongs to the Gram-negative porin family. As to quaternary structure, homotrimer.

The protein localises to the cell outer membrane. Serves as a slightly cation selective porin. The protein is Major outer membrane protein P.IB (porB) of Neisseria meningitidis serogroup B.